Reading from the N-terminus, the 242-residue chain is Probable transcriptional regulatory protein LBA0733 (242 aa).

Residues 1–22 (MSGHSKWHNIQGRKNAQDAKRG) are disordered.

It belongs to the TACO1 family.

Its subcellular location is the cytoplasm. This Lactobacillus acidophilus (strain ATCC 700396 / NCK56 / N2 / NCFM) protein is Probable transcriptional regulatory protein LBA0733.